The sequence spans 517 residues: Probable bifunctional methylthioribulose-1-phosphate dehydratase/enolase-phosphatase E1 1 (517 aa).

A methylthioribulose-1-phosphate dehydratase region spans residues 1–240; sequence MAAAALNGLK…AIKLYQLGLD (240 aa). C112 serves as a coordination point for substrate. Zn(2+) is bound by residues H130 and H132. Catalysis depends on E155, which acts as the Proton donor/acceptor; for methylthioribulose-1-phosphate dehydratase activity. H205 is a Zn(2+) binding site. Positions 278 to 517 are enolase-phosphatase E1; that stretch reads IVLDIEGTTT…FKTITSFSDI (240 aa). Residues D281 and E283 each coordinate Mg(2+). Residues 416–417 and K450 each bind substrate; that span reads SS. D476 contributes to the Mg(2+) binding site.

It in the N-terminal section; belongs to the aldolase class II family. MtnB subfamily. In the C-terminal section; belongs to the HAD-like hydrolase superfamily. MasA/MtnC family. Requires Zn(2+) as cofactor. The cofactor is Mg(2+).

The enzyme catalyses 5-(methylsulfanyl)-D-ribulose 1-phosphate = 5-methylsulfanyl-2,3-dioxopentyl phosphate + H2O. It catalyses the reaction 5-methylsulfanyl-2,3-dioxopentyl phosphate + H2O = 1,2-dihydroxy-5-(methylsulfanyl)pent-1-en-3-one + phosphate. It functions in the pathway amino-acid biosynthesis; L-methionine biosynthesis via salvage pathway; L-methionine from S-methyl-5-thio-alpha-D-ribose 1-phosphate: step 2/6. It participates in amino-acid biosynthesis; L-methionine biosynthesis via salvage pathway; L-methionine from S-methyl-5-thio-alpha-D-ribose 1-phosphate: step 3/6. The protein operates within amino-acid biosynthesis; L-methionine biosynthesis via salvage pathway; L-methionine from S-methyl-5-thio-alpha-D-ribose 1-phosphate: step 4/6. This is Probable bifunctional methylthioribulose-1-phosphate dehydratase/enolase-phosphatase E1 1 from Vitis vinifera (Grape).